A 444-amino-acid chain; its full sequence is Ribulose bisphosphate carboxylase large chain (444 aa).

At lysine 5 the chain carries N6,N6,N6-trimethyllysine. 2 residues coordinate substrate: asparagine 114 and threonine 164. The active-site Proton acceptor is the lysine 166. A substrate-binding site is contributed by lysine 168. Lysine 192, aspartate 194, and glutamate 195 together coordinate Mg(2+). Lysine 192 is subject to N6-carboxylysine. Histidine 285 functions as the Proton acceptor in the catalytic mechanism. The substrate site is built by arginine 286, histidine 318, and serine 370.

It belongs to the RuBisCO large chain family. Type I subfamily. Heterohexadecamer of 8 large chains and 8 small chains; disulfide-linked. The disulfide link is formed within the large subunit homodimers. The cofactor is Mg(2+). In terms of processing, the disulfide bond which can form in the large chain dimeric partners within the hexadecamer appears to be associated with oxidative stress and protein turnover.

The protein localises to the plastid. It is found in the chloroplast. It carries out the reaction 2 (2R)-3-phosphoglycerate + 2 H(+) = D-ribulose 1,5-bisphosphate + CO2 + H2O. The enzyme catalyses D-ribulose 1,5-bisphosphate + O2 = 2-phosphoglycolate + (2R)-3-phosphoglycerate + 2 H(+). Functionally, ruBisCO catalyzes two reactions: the carboxylation of D-ribulose 1,5-bisphosphate, the primary event in carbon dioxide fixation, as well as the oxidative fragmentation of the pentose substrate in the photorespiration process. Both reactions occur simultaneously and in competition at the same active site. This Ginkgo biloba (Ginkgo) protein is Ribulose bisphosphate carboxylase large chain.